Reading from the N-terminus, the 189-residue chain is Interferon alpha-A (189 aa).

The N-terminal stretch at 1-23 is a signal peptide; sequence MAPAWSFLLSLLLLSCNAICSLG. 2 cysteine pairs are disulfide-bonded: C24–C122 and C52–C162.

Belongs to the alpha/beta interferon family.

The protein resides in the secreted. Its function is as follows. Produced by macrophages, IFN-alpha have antiviral activities. Interferon stimulates the production of two enzymes: a protein kinase and an oligoadenylate synthetase. This Bos taurus (Bovine) protein is Interferon alpha-A (IFNAA).